We begin with the raw amino-acid sequence, 229 residues long: Ribose-5-phosphate isomerase A (229 aa).

Substrate is bound by residues 28 to 31 (TGST), 85 to 88 (DGAD), and 98 to 101 (KGRG). Catalysis depends on E107, which acts as the Proton acceptor. Residue K125 participates in substrate binding.

It belongs to the ribose 5-phosphate isomerase family. As to quaternary structure, homotetramer.

The catalysed reaction is aldehydo-D-ribose 5-phosphate = D-ribulose 5-phosphate. It participates in carbohydrate degradation; pentose phosphate pathway; D-ribose 5-phosphate from D-ribulose 5-phosphate (non-oxidative stage): step 1/1. Its activity is regulated as follows. Inhibited by D-4-phosphoerythronic acid. Functionally, involved in the first step of the non-oxidative branch of the pentose phosphate pathway. It catalyzes the reversible conversion of ribose-5-phosphate to ribulose 5-phosphate. This is Ribose-5-phosphate isomerase A from Pyrococcus horikoshii (strain ATCC 700860 / DSM 12428 / JCM 9974 / NBRC 100139 / OT-3).